Reading from the N-terminus, the 315-residue chain is Olfactory receptor 5A1 (315 aa).

Over 1–28 (MSITKAWNSSSVTMFILLGFTDHPELQA) the chain is Extracellular. An N-linked (GlcNAc...) asparagine glycan is attached at asparagine 8. A helical transmembrane segment spans residues 29–52 (LLFVTFLGIYLTTLAWNLALIFLI). Residues 53–60 (RGDTHLHT) lie on the Cytoplasmic side of the membrane. Residues 61 to 82 (PMYFFLSNLSFIDICYSSAVAP) form a helical membrane-spanning segment. Residues 83-103 (NMLTDFFWEQKTISFVGCAAQ) lie on the Extracellular side of the membrane. An intrachain disulfide couples cysteine 100 to cysteine 192. The helical transmembrane segment at 104-123 (FFFFVGMGLSECLLLTAMAY) threads the bilayer. Residues 124–142 (DRYAAISSPLLYPTIMTQG) lie on the Cytoplasmic side of the membrane. The helical transmembrane segment at 143-161 (LCTRMVVGAYVGGFLSSLI) threads the bilayer. Residues 162–198 (QASSIFRLHFCGPNIINHFFCDLPPVLALSCSDTFLS) are Extracellular-facing. A helical membrane pass occupies residues 199–222 (QVVNFLVVVTVGGTSFLQLLISYG). Residues 223–239 (YIVSAVLKIPSAEGRWK) lie on the Cytoplasmic side of the membrane. The helical transmembrane segment at 240–262 (ACNTCASHLMVVTLLFGTALFVY) threads the bilayer. Topologically, residues 263–275 (LRPSSSYLLGRDK) are extracellular. Residues 276–295 (VVSVFYSLVIPMLNPLIYSL) form a helical membrane-spanning segment. At 296 to 315 (RNKEIKDALWKVLERKKVFS) the chain is on the cytoplasmic side.

Belongs to the G-protein coupled receptor 1 family.

It localises to the cell membrane. In terms of biological role, odorant receptor. The protein is Olfactory receptor 5A1 (OR5A1) of Homo sapiens (Human).